A 457-amino-acid chain; its full sequence is Antizyme inhibitor 2 (457 aa).

Residues 115–138 (QVAQIKYAAKHGVRLLSFDNEVEL) are necessary for polyamine uptake stimulation.

Belongs to the Orn/Lys/Arg decarboxylase class-II family. ODC antizyme inhibitor subfamily. Monomer. Interacts with OAZ1, OAZ2 and OAZ3; this interaction disrupts the interaction between the antizyme and ODC1. Does not form a heterodimer with ODC1. Ubiquitinated, leading to its proteasomal degradation; a process that is reduced in presence of antizymes. May also be degraded through the lysosomal degradative pathway in a proteasomal-independent manner.

It localises to the nucleus. The protein localises to the cytoplasm. Its subcellular location is the perinuclear region. It is found in the membrane. The protein resides in the cytoplasmic vesicle. It localises to the endoplasmic reticulum-Golgi intermediate compartment. The protein localises to the golgi apparatus. Its subcellular location is the cis-Golgi network. It is found in the trans-Golgi network. The protein resides in the cytoplasmic granule. It localises to the cell projection. The protein localises to the axon. Its subcellular location is the dendrite. It is found in the perikaryon. Its function is as follows. Antizyme inhibitor (AZI) protein that positively regulates ornithine decarboxylase (ODC) activity and polyamine uptake. AZI is an enzymatically inactive ODC homolog that counteracts the negative effect of ODC antizymes (AZs) OAZ1, OAZ2 and OAZ3 on ODC activity by competing with ODC for antizyme-binding. Inhibits antizyme-dependent ODC degradation and releases ODC monomers from their inactive complex with antizymes, leading to formation of the catalytically active ODC homodimer and restoring polyamine production. Participates in the morphological integrity of the trans-Golgi network (TGN) and functions as a regulator of intracellular secretory vesicle trafficking. In Rattus norvegicus (Rat), this protein is Antizyme inhibitor 2 (Azin2).